Consider the following 275-residue polypeptide: MELWFTEKQTKHFGITARINRTLHTEQTEFQKLDMVETEEFGNMLILDGMVMTTEKDEFVYHEMVAHVPLFTHPNPENVLVVGGGDGGVIREVLKHPSVKKATLVEIDGKVIEYSKQYLPSIAGALDNERVEVKVGDGFLHIAESENEYDVIMVDSTEPVGPAVNLFTKGFYAGISKALKEDGIFVAQTDNPWFTPELITTVFKDVKEIFPITRLYTANIPTYPSGLWTFTIGSKKHDPLEVSEERFHEIETKYYTKELHNAAFALPKFVGDLIK.

Residues 2–235 (ELWFTEKQTK…GLWTFTIGSK (234 aa)) enclose the PABS domain. Position 31 (Gln31) interacts with S-methyl-5'-thioadenosine. 2 residues coordinate spermidine: His62 and Asp86. S-methyl-5'-thioadenosine contacts are provided by residues Glu106 and 137-138 (DG). Catalysis depends on Asp155, which acts as the Proton acceptor. 155–158 (DSTE) provides a ligand contact to spermidine. Pro162 contributes to the S-methyl-5'-thioadenosine binding site.

Belongs to the spermidine/spermine synthase family. Homodimer or homotetramer.

The protein resides in the cytoplasm. It carries out the reaction S-adenosyl 3-(methylsulfanyl)propylamine + putrescine = S-methyl-5'-thioadenosine + spermidine + H(+). The protein operates within amine and polyamine biosynthesis; spermidine biosynthesis; spermidine from putrescine: step 1/1. In terms of biological role, catalyzes the irreversible transfer of a propylamine group from the amino donor S-adenosylmethioninamine (decarboxy-AdoMet) to putrescine (1,4-diaminobutane) to yield spermidine. This chain is Polyamine aminopropyltransferase, found in Bacillus cereus (strain ATCC 10987 / NRS 248).